We begin with the raw amino-acid sequence, 416 residues long: Peroxisomal isocitrate dehydrogenase [NADP] (416 aa).

NADP(+)-binding positions include 77–79 (TIT) and Arg-84. Thr-79 provides a ligand contact to substrate. Residues 96 to 102 (SPNGTIR), Arg-111, and Arg-134 each bind substrate. Asp-253 is a Mn(2+) binding site. Lys-261 contacts NADP(+). Asp-276 contacts Mn(2+). NADP(+)-binding positions include 311–316 (GTVTRH) and Asn-329. The short motif at 414 to 416 (SRL) is the Peroxisomal targeting signal element.

It belongs to the isocitrate and isopropylmalate dehydrogenases family. Mg(2+) is required as a cofactor. Requires Mn(2+) as cofactor.

It localises to the peroxisome. It catalyses the reaction D-threo-isocitrate + NADP(+) = 2-oxoglutarate + CO2 + NADPH. May be involved in response to oxidative stresses. The protein is Peroxisomal isocitrate dehydrogenase [NADP] (ICDH) of Arabidopsis thaliana (Mouse-ear cress).